The chain runs to 306 residues: Porphobilinogen deaminase (306 aa).

S-(dipyrrolylmethanemethyl)cysteine is present on C239.

This sequence belongs to the HMBS family. As to quaternary structure, monomer. Requires dipyrromethane as cofactor.

It carries out the reaction 4 porphobilinogen + H2O = hydroxymethylbilane + 4 NH4(+). Its pathway is porphyrin-containing compound metabolism; protoporphyrin-IX biosynthesis; coproporphyrinogen-III from 5-aminolevulinate: step 2/4. In terms of biological role, tetrapolymerization of the monopyrrole PBG into the hydroxymethylbilane pre-uroporphyrinogen in several discrete steps. The chain is Porphobilinogen deaminase from Helicobacter pylori (strain G27).